The following is a 442-amino-acid chain: Zinc finger protein sfp1 (442 aa).

Low complexity predominate over residues 193–208; it reads AASSDMSSDEASSQAE. Disordered stretches follow at residues 193–219 and 304–333; these read AASSDMSSDEASSQAETTGTPKKMPES and SPFVRKSSSDLEAKPSKKQRSTPAFSHDSP. 2 consecutive C2H2-type zinc fingers follow at residues 350 to 375 and 399 to 422; these read YKCPVPNCDKAYKNQNGLKYHKLHGH and YRCEVCSKRYKNLNGLKYHRTHSH.

It is found in the cytoplasm. Its subcellular location is the nucleus. The sequence is that of Zinc finger protein sfp1 (sfp1) from Schizosaccharomyces pombe (strain 972 / ATCC 24843) (Fission yeast).